Here is a 404-residue protein sequence, read N- to C-terminus: Putative transporter AmpG 2 (404 aa).

12 consecutive transmembrane segments (helical) span residues 11-31, 49-69, 84-104, 109-129, 154-174, 177-197, 224-244, 261-281, 294-311, 315-337, 353-373, and 378-398; these read IYNILFILFISLPGGLIYLLT, IGLFSLVNFIHIFKFLWGPLL, YCLIFSLLSCICCVYILTGFN, FISFSLCLIILAFFSSIYDML, FRIGILISGSGALYLSTIISW, VYRTMAILCVPSLLLIIFYPL, WLIIVGFMLLYRLQDNFLAVM, LGYKAFGMCATIAGGFIGGFL, VLVYHALSSITFLLLYSY, ITTLYIAVFLQEFTKGLTMSPFF, IALITSIAYISTVLFGSISGY, and LGWGYFFAIASFCFIPAYILI.

The protein belongs to the major facilitator superfamily.

It localises to the cell inner membrane. The chain is Putative transporter AmpG 2 (ampG2) from Rickettsia bellii (strain RML369-C).